Consider the following 56-residue polypeptide: Small ribosomal subunit protein uS14 (56 aa).

The Zn(2+) site is built by cysteine 21, cysteine 24, cysteine 39, and cysteine 42.

Belongs to the universal ribosomal protein uS14 family. Zn(2+) serves as cofactor.

The polypeptide is Small ribosomal subunit protein uS14 (rps29A) (Guillardia theta (Cryptophyte)).